The following is a 461-amino-acid chain: Cysteine--tRNA ligase (461 aa).

Cys31 provides a ligand contact to Zn(2+). The 'HIGH' region signature appears at 33 to 43 (PTVYDFAHIGN). Zn(2+)-binding residues include Cys219, His244, and Glu248. The 'KMSKS' region motif lies at 277–281 (KMSKS). Position 280 (Lys280) interacts with ATP. Residues 436–452 (SEKGIQLKDGKDKETGE) show a composition bias toward basic and acidic residues. Residues 436–461 (SEKGIQLKDGKDKETGERTTTWELKR) are disordered.

This sequence belongs to the class-I aminoacyl-tRNA synthetase family. As to quaternary structure, monomer. Zn(2+) is required as a cofactor.

The protein localises to the cytoplasm. The catalysed reaction is tRNA(Cys) + L-cysteine + ATP = L-cysteinyl-tRNA(Cys) + AMP + diphosphate. The chain is Cysteine--tRNA ligase from Agrobacterium fabrum (strain C58 / ATCC 33970) (Agrobacterium tumefaciens (strain C58)).